The sequence spans 229 residues: CRISPR pre-crRNA endoribonuclease Cas5d (229 aa).

Belongs to the CRISPR-associated protein Cas5 family. Subtype I-C/Dvulg subfamily. Does not require a metal cofactor. is required as a cofactor.

Functionally, CRISPR (clustered regularly interspaced short palindromic repeat) is an adaptive immune system that provides protection against mobile genetic elements (viruses, transposable elements and conjugative plasmids). CRISPR clusters contain spacers, sequences complementary to antecedent mobile elements, and target invading nucleic acids. CRISPR clusters are transcribed and processed into CRISPR RNA (crRNA). This protein is a sequence-specific endonuclease that cleaves pre-crRNA into mature crRNA, possibly by an intramolecular attack of the 2'-hydroxyl group of G26 on the scissile phosphodiester, cutting the precursor 3' to G26 residue yielding 5'-hydroxyl and 2' and/or 3' ends lacking a hydroxyl group (perhaps a 2'/3' cyclic phosphodiester). Requires between 4 and 8 nt downstream of the cleavage site for both binding and cleavage of pre-crRNA. Substitution with dG at this position abolishes cleavage but not RNA binding. Does not cleave pre-crRNA associated with the M.succiniciproducens strain MBEL55E Cas5 protein (AC Q65TW5) CRISPR locus. The sequence is that of CRISPR pre-crRNA endoribonuclease Cas5d from Thermus thermophilus (strain ATCC BAA-163 / DSM 7039 / HB27).